A 272-amino-acid chain; its full sequence is 3-methyl-2-oxobutanoate hydroxymethyltransferase (272 aa).

Positions 52 and 91 each coordinate Mg(2+). 3-methyl-2-oxobutanoate-binding positions include 52–53 (DS), Asp91, and Lys121. Residue Glu123 coordinates Mg(2+). Catalysis depends on Glu190, which acts as the Proton acceptor.

This sequence belongs to the PanB family. Homodecamer; pentamer of dimers. It depends on Mg(2+) as a cofactor.

It localises to the cytoplasm. The enzyme catalyses 3-methyl-2-oxobutanoate + (6R)-5,10-methylene-5,6,7,8-tetrahydrofolate + H2O = 2-dehydropantoate + (6S)-5,6,7,8-tetrahydrofolate. Its pathway is cofactor biosynthesis; (R)-pantothenate biosynthesis; (R)-pantoate from 3-methyl-2-oxobutanoate: step 1/2. Functionally, catalyzes the reversible reaction in which hydroxymethyl group from 5,10-methylenetetrahydrofolate is transferred onto alpha-ketoisovalerate to form ketopantoate. The protein is 3-methyl-2-oxobutanoate hydroxymethyltransferase of Cytophaga hutchinsonii (strain ATCC 33406 / DSM 1761 / CIP 103989 / NBRC 15051 / NCIMB 9469 / D465).